The chain runs to 337 residues: Glucokinase (337 aa).

An ATP-binding site is contributed by 11 to 16 (ADIGGT).

Belongs to the bacterial glucokinase family.

Its subcellular location is the cytoplasm. The catalysed reaction is D-glucose + ATP = D-glucose 6-phosphate + ADP + H(+). This is Glucokinase from Xylella fastidiosa (strain 9a5c).